We begin with the raw amino-acid sequence, 69 residues long: Cell division protein CrgA (69 aa).

The next 2 membrane-spanning stretches (helical) occupy residues valine 14–phenylalanine 34 and alanine 45–methionine 65.

The protein belongs to the CrgA family.

The protein resides in the cell membrane. Involved in cell division. This is Cell division protein CrgA from Tropheryma whipplei (strain TW08/27) (Whipple's bacillus).